The following is a 68-amino-acid chain: Large ribosomal subunit protein bL35 (68 aa).

Residues 1–25 (MGTKIKTHKGTKKRFRLSAKGKAMH) show a composition bias toward basic residues. Residues 1–43 (MGTKIKTHKGTKKRFRLSAKGKAMHRQSGTSHLAKGLSKKRRR) are disordered.

This sequence belongs to the bacterial ribosomal protein bL35 family.

The protein is Large ribosomal subunit protein bL35 of Rhodopirellula baltica (strain DSM 10527 / NCIMB 13988 / SH1).